Consider the following 613-residue polypeptide: tRNA 5-methylaminomethyl-2-thiouridine biosynthesis bifunctional protein MnmC (613 aa).

The segment at 1–225 (MKKAKLIFKD…KREMIKAYLE (225 aa)) is tRNA (mnm(5)s(2)U34)-methyltransferase. An FAD-dependent cmnm(5)s(2)U34 oxidoreductase region spans residues 252–613 (IGAGISSAVL…FLVRKLKKGL (362 aa)).

The protein in the N-terminal section; belongs to the methyltransferase superfamily. tRNA (mnm(5)s(2)U34)-methyltransferase family. It in the C-terminal section; belongs to the DAO family. FAD is required as a cofactor.

Its subcellular location is the cytoplasm. The enzyme catalyses 5-aminomethyl-2-thiouridine(34) in tRNA + S-adenosyl-L-methionine = 5-methylaminomethyl-2-thiouridine(34) in tRNA + S-adenosyl-L-homocysteine + H(+). Catalyzes the last two steps in the biosynthesis of 5-methylaminomethyl-2-thiouridine (mnm(5)s(2)U) at the wobble position (U34) in tRNA. Catalyzes the FAD-dependent demodification of cmnm(5)s(2)U34 to nm(5)s(2)U34, followed by the transfer of a methyl group from S-adenosyl-L-methionine to nm(5)s(2)U34, to form mnm(5)s(2)U34. In Campylobacter jejuni subsp. doylei (strain ATCC BAA-1458 / RM4099 / 269.97), this protein is tRNA 5-methylaminomethyl-2-thiouridine biosynthesis bifunctional protein MnmC.